We begin with the raw amino-acid sequence, 143 residues long: UPF0651 protein P31B10.02, mitochondrial (143 aa).

The Oxidoreductase-like domain occupies isoleucine 48–arginine 93.

Belongs to the UPF0651 family.

The protein localises to the mitochondrion. The sequence is that of UPF0651 protein P31B10.02, mitochondrial from Schizosaccharomyces pombe (strain 972 / ATCC 24843) (Fission yeast).